The primary structure comprises 400 residues: Elongation factor Tu (400 aa).

One can recognise a tr-type G domain in the interval 10–209 (KPHVNIGTIG…EVDNYIPTPE (200 aa)). Residues 19–26 (GHVDHGKT) are G1. 19–26 (GHVDHGKT) contributes to the GTP binding site. T26 contacts Mg(2+). Positions 60–64 (GITIN) are G2. The segment at 81–84 (DCPG) is G3. GTP-binding positions include 81-85 (DCPGH) and 136-139 (NKCD). The tract at residues 136–139 (NKCD) is G4. A G5 region spans residues 174-176 (SAL).

Belongs to the TRAFAC class translation factor GTPase superfamily. Classic translation factor GTPase family. EF-Tu/EF-1A subfamily. Monomer.

The protein resides in the cytoplasm. The enzyme catalyses GTP + H2O = GDP + phosphate + H(+). In terms of biological role, GTP hydrolase that promotes the GTP-dependent binding of aminoacyl-tRNA to the A-site of ribosomes during protein biosynthesis. This chain is Elongation factor Tu, found in Ruminiclostridium cellulolyticum (strain ATCC 35319 / DSM 5812 / JCM 6584 / H10) (Clostridium cellulolyticum).